Reading from the N-terminus, the 396-residue chain is Acyl-[acyl-carrier-protein] desaturase, chloroplastic (396 aa).

Residues 1 to 33 (MALKFHPLTSQSPKLPSFRMPQLASLRSPKFVM) constitute a chloroplast transit peptide. Fe cation is bound by residues Glu138, Glu176, His179, Glu229, Glu262, and His265.

Belongs to the fatty acid desaturase type 2 family. Homodimer. Requires Fe(2+) as cofactor.

It localises to the plastid. The protein resides in the chloroplast. Its pathway is lipid metabolism; fatty acid metabolism. Functionally, introduces a cis double bond in the acyl chain of an acyl-[acyl-carrier protein]. The chain is Acyl-[acyl-carrier-protein] desaturase, chloroplastic from Cucumis sativus (Cucumber).